The sequence spans 83 residues: U5-theraphotoxin-Hs1c (83 aa).

The signal sequence occupies residues 1-21 (MKTSMFLTLTGLVLLFVVCYA). A propeptide spanning residues 22-49 (SESEEKEFPKELLSSIFAADSDFKVEER) is cleaved from the precursor. Cystine bridges form between C51–C63, C56–C68, and C62–C75.

It belongs to the neurotoxin 10 (Hwtx-1) family. 51 (Hntx-8) subfamily. Hntx-8 sub-subfamily. As to expression, expressed by the venom gland.

Its subcellular location is the secreted. Agglutinates erythrocytes. The chain is U5-theraphotoxin-Hs1c from Cyriopagopus schmidti (Chinese bird spider).